A 434-amino-acid chain; its full sequence is MIVRRALALAALALAASPALAAQERPTIVVGSPDFRPLPIAVAAFQGEGDAGVAATQTAEVVRADLVLSGLFDVLDPRGFLADPSEGFAAPSIRFARWADVGADGLAKARVRRGPAGLEGELHLYEVRAGREVLVKLLRVDGADARSLAHRMADEIVRYYTREPGIFATRIAAIRRGRGTWELVTQDMDGGNQQVLLSERSILMSPAWRPDGREILVTSYRSGRPELWAYRFSDRAFRPLGRHRNAFGGVYSPDGSRIAFTVSEGNVTDLWVMSADGVGARKLTSDPAIDVSPTWSPDGRRIAFVSDRSGTPQIYVMGADGSGARRLTFQGNYNQTPQWSPRGDLIAFTARDERKVFDVFVVSPDSGAINRITQDQGRTNEEPSWAPNGRLMIFRTDRNGGIQLVVSDARGDRQTPVTSGKTDLAAPAWGPLAP.

An N-terminal signal peptide occupies residues 1–21 (MIVRRALALAALALAASPALA). The disordered stretch occupies residues 411 to 434 (GDRQTPVTSGKTDLAAPAWGPLAP).

Belongs to the TolB family. In terms of assembly, the Tol-Pal system is composed of five core proteins: the inner membrane proteins TolA, TolQ and TolR, the periplasmic protein TolB and the outer membrane protein Pal. They form a network linking the inner and outer membranes and the peptidoglycan layer.

The protein localises to the periplasm. Part of the Tol-Pal system, which plays a role in outer membrane invagination during cell division and is important for maintaining outer membrane integrity. This Anaeromyxobacter sp. (strain K) protein is Tol-Pal system protein TolB.